We begin with the raw amino-acid sequence, 66 residues long: Large ribosomal subunit protein uL29 (66 aa).

Belongs to the universal ribosomal protein uL29 family.

This Borrelia duttonii (strain Ly) protein is Large ribosomal subunit protein uL29.